The chain runs to 123 residues: Small ribosomal subunit protein bS16 (123 aa).

The interval 87–123 (VKNNPVKAKPGKRAQERAAEKAQKVADAAAAAADAAE) is disordered. A compositionally biased stretch (basic and acidic residues) spans 99–110 (RAQERAAEKAQK). Residues 111–123 (VADAAAAAADAAE) are compositionally biased toward low complexity.

The protein belongs to the bacterial ribosomal protein bS16 family.

The protein is Small ribosomal subunit protein bS16 of Rhizobium johnstonii (strain DSM 114642 / LMG 32736 / 3841) (Rhizobium leguminosarum bv. viciae).